We begin with the raw amino-acid sequence, 295 residues long: Phosphatidylserine decarboxylase proenzyme (295 aa).

Residues aspartate 90, histidine 147, and serine 254 each act as charge relay system; for autoendoproteolytic cleavage activity in the active site. Serine 254 (schiff-base intermediate with substrate; via pyruvic acid; for decarboxylase activity) is an active-site residue. Residue serine 254 is modified to Pyruvic acid (Ser); by autocatalysis.

It belongs to the phosphatidylserine decarboxylase family. PSD-B subfamily. Prokaryotic type I sub-subfamily. As to quaternary structure, heterodimer of a large membrane-associated beta subunit and a small pyruvoyl-containing alpha subunit. The cofactor is pyruvate. Post-translationally, is synthesized initially as an inactive proenzyme. Formation of the active enzyme involves a self-maturation process in which the active site pyruvoyl group is generated from an internal serine residue via an autocatalytic post-translational modification. Two non-identical subunits are generated from the proenzyme in this reaction, and the pyruvate is formed at the N-terminus of the alpha chain, which is derived from the carboxyl end of the proenzyme. The autoendoproteolytic cleavage occurs by a canonical serine protease mechanism, in which the side chain hydroxyl group of the serine supplies its oxygen atom to form the C-terminus of the beta chain, while the remainder of the serine residue undergoes an oxidative deamination to produce ammonia and the pyruvoyl prosthetic group on the alpha chain. During this reaction, the Ser that is part of the protease active site of the proenzyme becomes the pyruvoyl prosthetic group, which constitutes an essential element of the active site of the mature decarboxylase.

Its subcellular location is the cell membrane. It catalyses the reaction a 1,2-diacyl-sn-glycero-3-phospho-L-serine + H(+) = a 1,2-diacyl-sn-glycero-3-phosphoethanolamine + CO2. Its pathway is phospholipid metabolism; phosphatidylethanolamine biosynthesis; phosphatidylethanolamine from CDP-diacylglycerol: step 2/2. Catalyzes the formation of phosphatidylethanolamine (PtdEtn) from phosphatidylserine (PtdSer). The protein is Phosphatidylserine decarboxylase proenzyme of Sodalis glossinidius (strain morsitans).